The chain runs to 438 residues: Enolase (438 aa).

Gln-164 serves as a coordination point for (2R)-2-phosphoglycerate. Catalysis depends on Glu-206, which acts as the Proton donor. Mg(2+) contacts are provided by Asp-243, Glu-289, and Asp-316. (2R)-2-phosphoglycerate-binding residues include Lys-341, Arg-370, Ser-371, and Lys-392. Residue Lys-341 is the Proton acceptor of the active site.

Belongs to the enolase family. Requires Mg(2+) as cofactor.

Its subcellular location is the cytoplasm. It is found in the secreted. It localises to the cell surface. The enzyme catalyses (2R)-2-phosphoglycerate = phosphoenolpyruvate + H2O. It functions in the pathway carbohydrate degradation; glycolysis; pyruvate from D-glyceraldehyde 3-phosphate: step 4/5. In terms of biological role, catalyzes the reversible conversion of 2-phosphoglycerate (2-PG) into phosphoenolpyruvate (PEP). It is essential for the degradation of carbohydrates via glycolysis. This Borrelia garinii subsp. bavariensis (strain ATCC BAA-2496 / DSM 23469 / PBi) (Borreliella bavariensis) protein is Enolase.